The primary structure comprises 513 residues: MPYLLEMKNITKTFGSVKAIDNVSLRLNAGEIVSLCGENGSGKSTLMKVLCGIYPHGSYEGEIIFAGEEIQASHIRDTERKGIAIIHQELALVKELTVLENIFLGNEITHNGIMDYDLMTLRCQKLLAQVSLSISPDTRVGDLGLGQQQLVEIAKALNKQVRLLILDEPTASLTEQETSVLLDIIRDLQQHGIACIYISHKLNEVKAISDTICVIRDGQHIGTRDAAGMSEDDIITMMVGRELTALYPNEPHTTGDEILRIEHLTAWHPVNRHIKRVNDVSFSLKRGEILGIAGLVGAGRTETIQCLFGVWPGQWEGKIYIDGKQVDIRNCQQAIAQGIAMVPEDRKRDGIVPVMAVGKNITLAALKKFTGSISQLDDAAEQKCILESIQQLKVKTSSPDLAIGRLSGGNQQKAILARCLLLNPRILILDEPTRGIDIGAKYEIYKLINQLVQQGIAVIVISSELPEVLGLSDRVLVMHEGKLKANLINHNLTQEQVMEAALRSEHHVEKQSV.

ABC transporter domains follow at residues 5-242 (LEMK…VGRE) and 259-505 (LRIE…LRSE). 37-44 (GENGSGKS) lines the ATP pocket.

Belongs to the ABC transporter superfamily. Xylose importer (TC 3.A.1.2.4) family. As to quaternary structure, the complex is composed of two ATP-binding proteins (XylG), two transmembrane proteins (XylH) and a solute-binding protein (XylF).

It localises to the cell inner membrane. The enzyme catalyses D-xylose(out) + ATP + H2O = D-xylose(in) + ADP + phosphate + H(+). Part of the ABC transporter complex XylFGH involved in xylose import. Responsible for energy coupling to the transport system. This is Xylose import ATP-binding protein XylG from Escherichia coli O6:K15:H31 (strain 536 / UPEC).